The following is a 232-amino-acid chain: Enolase-phosphatase E1 (232 aa).

The protein belongs to the HAD-like hydrolase superfamily. MasA/MtnC family. In terms of assembly, monomer. The cofactor is Mg(2+).

It catalyses the reaction 5-methylsulfanyl-2,3-dioxopentyl phosphate + H2O = 1,2-dihydroxy-5-(methylsulfanyl)pent-1-en-3-one + phosphate. The protein operates within amino-acid biosynthesis; L-methionine biosynthesis via salvage pathway; L-methionine from S-methyl-5-thio-alpha-D-ribose 1-phosphate: step 3/6. Its pathway is amino-acid biosynthesis; L-methionine biosynthesis via salvage pathway; L-methionine from S-methyl-5-thio-alpha-D-ribose 1-phosphate: step 4/6. Its function is as follows. Bifunctional enzyme that catalyzes the enolization of 2,3-diketo-5-methylthiopentyl-1-phosphate (DK-MTP-1-P) into the intermediate 2-hydroxy-3-keto-5-methylthiopentenyl-1-phosphate (HK-MTPenyl-1-P), which is then dephosphorylated to form the acireductone 1,2-dihydroxy-3-keto-5-methylthiopentene (DHK-MTPene). The chain is Enolase-phosphatase E1 from Xanthomonas euvesicatoria pv. vesicatoria (strain 85-10) (Xanthomonas campestris pv. vesicatoria).